The chain runs to 430 residues: Septin-14 (430 aa).

A Septin-type G domain is found at 48 to 313 (KGFSFNILCV…ECYRSNRLQK (266 aa)). The segment at 58–65 (GETGIGKT) is G1 motif. GTP contacts are provided by residues 58-65 (GETGIGKT), glycine 113, 194-202 (KADSLSKND), glycine 246, and arginine 261. Positions 110–113 (KTVG) are G3 motif. The tract at residues 193-196 (AKAD) is G4 motif. Residues 329–410 (QEMYEAKRRE…IIDFYKMKAA (82 aa)) adopt a coiled-coil conformation. Residues 367 to 430 (DAEKELQDKF…NIKKDKDRKK (64 aa)) are required for interaction with SEPTIN4. Required for migration of cortical neurons during corticogenesis.

This sequence belongs to the TRAFAC class TrmE-Era-EngA-EngB-Septin-like GTPase superfamily. Septin GTPase family. Septins polymerize into heterooligomeric protein complexes that form filaments, and can associate with cellular membranes, actin filaments and microtubules. GTPase activity is required for filament formation. Interacts with ACTN4. Interacts with SEPTIN9. Interacts (via C-terminus) with SEPTIN4. In terms of tissue distribution, expressed in the testis and brain including the cerebrum, hippocampus and cerebellum (at protein level).

It is found in the cytoplasm. It localises to the cytoskeleton. Its subcellular location is the cell projection. The protein localises to the axon. The protein resides in the dendrite. It is found in the perikaryon. It localises to the perinuclear region. Its subcellular location is the cytoplasmic vesicle. The protein localises to the secretory vesicle. The protein resides in the acrosome. Its function is as follows. Filament-forming cytoskeletal GTPase. Involved in the migration of cortical neurons and the formation of neuron leading processes during embryonic development. Plays a role in sperm head formation during spermiogenesis, potentially via facilitating localization of ACTN4 to cell filaments. This Mus musculus (Mouse) protein is Septin-14.